Consider the following 363-residue polypeptide: Fructose-bisphosphate aldolase (363 aa).

Substrate contacts are provided by arginine 56 and lysine 147. The active-site Proton acceptor is the glutamate 188. The active-site Schiff-base intermediate with dihydroxyacetone-P is lysine 230.

Belongs to the class I fructose-bisphosphate aldolase family.

It carries out the reaction beta-D-fructose 1,6-bisphosphate = D-glyceraldehyde 3-phosphate + dihydroxyacetone phosphate. It participates in carbohydrate degradation; glycolysis; D-glyceraldehyde 3-phosphate and glycerone phosphate from D-glucose: step 4/4. The chain is Fructose-bisphosphate aldolase from Schistosoma mansoni (Blood fluke).